Here is a 441-residue protein sequence, read N- to C-terminus: Methionine aminopeptidase 2A (441 aa).

Residues 1–103 are disordered; the sequence is MAIGNPEVAT…SGDFPQGEIQ (103 aa). Residues 18–33 are compositionally biased toward polar residues; it reads AESSNGNESQLSSDLT. Positions 37 to 62 are enriched in basic and acidic residues; the sequence is DLAEVKEDEKDNNQEEEDGLKAEAST. Basic residues predominate over residues 63 to 76; the sequence is KKKKKKSKSKKKKS. Substrate is bound at residue H194. Residues D214, D225, and H294 each contribute to the a divalent metal cation site. H302 contributes to the substrate binding site. A divalent metal cation-binding residues include E327 and E422.

This sequence belongs to the peptidase M24A family. Methionine aminopeptidase eukaryotic type 2 subfamily. Co(2+) is required as a cofactor. Zn(2+) serves as cofactor. The cofactor is Mn(2+). It depends on Fe(2+) as a cofactor. In terms of tissue distribution, ubiquitous. Preferentially expressed in roots.

The protein localises to the cytoplasm. It carries out the reaction Release of N-terminal amino acids, preferentially methionine, from peptides and arylamides.. Functionally, cotranslationally removes the N-terminal methionine from nascent proteins. The N-terminal methionine is often cleaved when the second residue in the primary sequence is small and uncharged (Met-Ala-, Cys, Gly, Pro, Ser, Thr, or Val). The chain is Methionine aminopeptidase 2A from Arabidopsis thaliana (Mouse-ear cress).